The chain runs to 651 residues: Acetyl-coenzyme A synthetase (651 aa).

Residues 190-193 and T311 contribute to the CoA site; that span reads RRGK. Residues 387 to 389, 411 to 416, D508, and R523 contribute to the ATP site; these read GEP and DTWWQT. S531 contributes to the CoA binding site. Position 534 (R534) interacts with ATP. Positions 545, 547, and 550 each coordinate Mg(2+). K617 carries the post-translational modification N6-acetyllysine.

Belongs to the ATP-dependent AMP-binding enzyme family. It depends on Mg(2+) as a cofactor. Post-translationally, acetylated. Deacetylation by the SIR2-homolog deacetylase activates the enzyme.

The catalysed reaction is acetate + ATP + CoA = acetyl-CoA + AMP + diphosphate. Its function is as follows. Catalyzes the conversion of acetate into acetyl-CoA (AcCoA), an essential intermediate at the junction of anabolic and catabolic pathways. AcsA undergoes a two-step reaction. In the first half reaction, AcsA combines acetate with ATP to form acetyl-adenylate (AcAMP) intermediate. In the second half reaction, it can then transfer the acetyl group from AcAMP to the sulfhydryl group of CoA, forming the product AcCoA. The chain is Acetyl-coenzyme A synthetase from Mycobacterium bovis (strain ATCC BAA-935 / AF2122/97).